The following is a 215-amino-acid chain: Histidine biosynthesis bifunctional protein HisIE (215 aa).

A phosphoribosyl-AMP cyclohydrolase region spans residues 1–126 (MSHSDLPLAN…GHKSPPPADM (126 aa)). Residues 127 to 215 (LTELARVIGD…VYRKLGDRRR (89 aa)) are phosphoribosyl-ATP pyrophosphohydrolase.

The protein in the N-terminal section; belongs to the PRA-CH family. In the C-terminal section; belongs to the PRA-PH family.

Its subcellular location is the cytoplasm. It carries out the reaction 1-(5-phospho-beta-D-ribosyl)-ATP + H2O = 1-(5-phospho-beta-D-ribosyl)-5'-AMP + diphosphate + H(+). It catalyses the reaction 1-(5-phospho-beta-D-ribosyl)-5'-AMP + H2O = 1-(5-phospho-beta-D-ribosyl)-5-[(5-phospho-beta-D-ribosylamino)methylideneamino]imidazole-4-carboxamide. Its pathway is amino-acid biosynthesis; L-histidine biosynthesis; L-histidine from 5-phospho-alpha-D-ribose 1-diphosphate: step 2/9. It participates in amino-acid biosynthesis; L-histidine biosynthesis; L-histidine from 5-phospho-alpha-D-ribose 1-diphosphate: step 3/9. The chain is Histidine biosynthesis bifunctional protein HisIE (hisI) from Synechocystis sp. (strain ATCC 27184 / PCC 6803 / Kazusa).